The sequence spans 36 residues: uncharacterized protein (36 aa).

A helical membrane pass occupies residues 13-35 (SVILSPFPCCVLKSYLTVIYISF).

The protein localises to the host membrane. This is an uncharacterized protein from Pseudoalteromonas espejiana (Bacteriophage PM2).